The following is a 31-amino-acid chain: Cyclotide cter-C (31 aa).

The segment at residues 1 to 31 (GVPCAESCVWIPCTVTALLGCSCKDKVCYLD) is a cross-link (cyclopeptide (Gly-Asp)). Cystine bridges form between Cys4/Cys21, Cys8/Cys23, and Cys13/Cys28.

Contains 3 disulfide bonds. Post-translationally, this is a cyclic peptide.

Probably participates in a plant defense mechanism. The protein is Cyclotide cter-C of Clitoria ternatea (Butterfly pea).